A 245-amino-acid polypeptide reads, in one-letter code: Lytic switch protein BZLF1 (245 aa).

Residues 1-167 (MMDPNSTSED…RTRKPLQPES (167 aa)) are transactivation. Phosphothreonine occurs at positions 14 and 159. A disordered region spans residues 140–167 (QLADIGAPQPAPAAAPARRTRKPLQPES). The Bipartite nuclear localization signal signature appears at 157–194 (RRTRKPLQPESLEECDSELDIKRYKNRVASRKCRAKFK). A phosphoserine mark is found at serine 167, serine 173, and serine 186. Residues 178–195 (KRYKNRVASRKCRAKFKH) form a basic motif region. The bZIP domain maps to 178–228 (KRYKNRVASRKCRAKFKHLLQHYREVASAKSSENDRLRLLLKQMCPSLDVD). The interval 196 to 228 (LLQHYREVASAKSSENDRLRLLLKQMCPSLDVD) is leucine-zipper. The tract at residues 229-245 (SIIPRTPDVLHEDLLNF) is accessory activation domain.

It belongs to the bZIP family. Homodimer. Interacts (via b-ZIP domain) with the DNA polymerase processivity factor BMRF1 (via N-terminus); this interaction may inhibit BZLF1-induced transcription of the BMRF1 promoter. Interacts with human UBN1, CRTC2 and RACK1. Interacts (via N-terminus) with human PAX5 (via N-terminus); this interaction inhibits BZLF1-mediated lytic viral reactivation. Interacts (via leucine-zipper domain) with host CEBPA; this interaction induces G1 host cell cycle arrest. Interacts (via C-terminus) with host TP53BP1 (via C-terminus); this interaction is involved in the activation of the viral lytic cycle. Interacts with host chromatin-remodeling ATPase INO80; this interaction participates to the activation of early lytic viral genes by BZLF1. Interacts with host regulator of chromatin SMARCA5/hSNF2H; this interaction participates to the activation of early lytic viral genes by BZLF1. Interacts with host PLSCR1/Phospholipid scramblase 1; this interaction negatively regulates the transcriptional regulatory activity of BZLF1 by preventing the formation of the BZLF1-CBP complex.

It localises to the host nucleus. Transcription factor that acts as a molecular switch to induce the transition from the latent to the lytic or productive phase of the virus cycle. Mediates the switch from the latent to the lytic cycle of infection in cells containing a highly methylated viral genome. Probably binds to silenced chromatin and recruits host chromatin-remodeling enzymes. Regulates this switch by binding to 2 types of ZEBRA response elements (ZREs): the CpG-free AP-1 like elements (latency) and the methylated CpG-containing elements (lytic replication). Activates preferentially the methylated forms of the viral lytic R (BRLF1) and Na (BRRF1) gene promoters, the latters being the first genes activated during Z-mediated reactivation in latently infected cells. BZLF1 and BRLF1 act together to trigger lytic replication. Also binds the lytic origin of replication, oriLyt. Induces G1 cell cycle arrest by stabilizing the host CCAAT/enhancer binding protein CEBPA. This function is important because the lytic cycle preferentially takes place in host cells arrested in G1. This chain is Lytic switch protein BZLF1, found in Epstein-Barr virus (strain AG876) (HHV-4).